The following is a 132-amino-acid chain: MVMTDPIADFLTRIRNANQANHEVLEVPASNIKKGIAEILKREGFVKNVEFIEDDKQGIIRVFLKYGQNGEKVITGLKRVSKPGLRVYKKREDLPKVLNGLGIAILSTSEGLLTDKEARQKNVGGEVIAYVW.

The protein belongs to the universal ribosomal protein uS8 family. In terms of assembly, part of the 30S ribosomal subunit. Contacts proteins S5 and S12.

In terms of biological role, one of the primary rRNA binding proteins, it binds directly to 16S rRNA central domain where it helps coordinate assembly of the platform of the 30S subunit. This chain is Small ribosomal subunit protein uS8, found in Streptococcus gordonii (strain Challis / ATCC 35105 / BCRC 15272 / CH1 / DL1 / V288).